A 460-amino-acid polypeptide reads, in one-letter code: Bifunctional protein GlmU (460 aa).

Residues M1–R235 form a pyrophosphorylase region. Residues L9–G12, K23, Q76, and G81–T82 each bind UDP-N-acetyl-alpha-D-glucosamine. Mg(2+) is bound at residue D109. G146, E161, N176, and N233 together coordinate UDP-N-acetyl-alpha-D-glucosamine. Mg(2+) is bound at residue N233. The linker stretch occupies residues V236 to E256. Residues G257–R460 form an N-acetyltransferase region. UDP-N-acetyl-alpha-D-glucosamine-binding residues include R338 and K356. Catalysis depends on H368, which acts as the Proton acceptor. UDP-N-acetyl-alpha-D-glucosamine-binding residues include Y371 and N382. Acetyl-CoA contacts are provided by residues N391–Y392 and A428.

In the N-terminal section; belongs to the N-acetylglucosamine-1-phosphate uridyltransferase family. The protein in the C-terminal section; belongs to the transferase hexapeptide repeat family. As to quaternary structure, homotrimer. Requires Mg(2+) as cofactor.

Its subcellular location is the cytoplasm. It carries out the reaction alpha-D-glucosamine 1-phosphate + acetyl-CoA = N-acetyl-alpha-D-glucosamine 1-phosphate + CoA + H(+). It catalyses the reaction N-acetyl-alpha-D-glucosamine 1-phosphate + UTP + H(+) = UDP-N-acetyl-alpha-D-glucosamine + diphosphate. It participates in nucleotide-sugar biosynthesis; UDP-N-acetyl-alpha-D-glucosamine biosynthesis; N-acetyl-alpha-D-glucosamine 1-phosphate from alpha-D-glucosamine 6-phosphate (route II): step 2/2. Its pathway is nucleotide-sugar biosynthesis; UDP-N-acetyl-alpha-D-glucosamine biosynthesis; UDP-N-acetyl-alpha-D-glucosamine from N-acetyl-alpha-D-glucosamine 1-phosphate: step 1/1. It functions in the pathway bacterial outer membrane biogenesis; LPS lipid A biosynthesis. Its function is as follows. Catalyzes the last two sequential reactions in the de novo biosynthetic pathway for UDP-N-acetylglucosamine (UDP-GlcNAc). The C-terminal domain catalyzes the transfer of acetyl group from acetyl coenzyme A to glucosamine-1-phosphate (GlcN-1-P) to produce N-acetylglucosamine-1-phosphate (GlcNAc-1-P), which is converted into UDP-GlcNAc by the transfer of uridine 5-monophosphate (from uridine 5-triphosphate), a reaction catalyzed by the N-terminal domain. The sequence is that of Bifunctional protein GlmU from Bifidobacterium adolescentis (strain ATCC 15703 / DSM 20083 / NCTC 11814 / E194a).